We begin with the raw amino-acid sequence, 456 residues long: MKLRVVILAAGKGTRMRSELPKVLHKVANKPMVEHVIDTARSLKPDAINLIYGHGGDQLKQAIAGDDLTWVEQREQLGTGHAVQQVIPHLKSSEKVIILYGDVPLLTESTLIKLVTASANTSLGLLTMTLAEPTGYGRIVRNERRSVTGIVEQKDANAQQLAINEVNTGIMIADSDKLKSWLEQLSNDNAQKEYYLTDIVAMAAREGINIATAQPDNAQEVEGANNRQQLASLERALQQRQAEELMTQGVTLIDPARFDCRGKLSAGSDVTIDINAVFEGNVVLGDRVVIEPNCVIRNSVIGDDTVIRANSHIEDAKVAKGCKVGPFARLRPGAELADEAQVGNFVEMKKSRLGKGSKASHLTYLGDTQVGEYANIGAGTITCNYDGVNKALTEIGDGAFIGSNSSLVAPVAIGKNATVGAGSVITRAVADEELAVARGKQRNISGWQRPQSKKGT.

The tract at residues 1 to 227 (MKLRVVILAA…AQEVEGANNR (227 aa)) is pyrophosphorylase. Residues 8–11 (LAAG), Lys-22, Gln-73, 78–79 (GT), 100–102 (YGD), Gly-137, Glu-152, Asn-167, and Asn-225 each bind UDP-N-acetyl-alpha-D-glucosamine. Mg(2+) is bound at residue Asp-102. Residue Asn-225 coordinates Mg(2+). The linker stretch occupies residues 228–248 (QQLASLERALQQRQAEELMTQ). The N-acetyltransferase stretch occupies residues 249-456 (GVTLIDPARF…WQRPQSKKGT (208 aa)). Residues Arg-331 and Lys-349 each contribute to the UDP-N-acetyl-alpha-D-glucosamine site. His-361 functions as the Proton acceptor in the catalytic mechanism. UDP-N-acetyl-alpha-D-glucosamine is bound by residues Tyr-364 and Asn-375. Acetyl-CoA contacts are provided by residues Ala-378, 384–385 (NY), Ser-403, Ala-421, and Arg-438.

In the N-terminal section; belongs to the N-acetylglucosamine-1-phosphate uridyltransferase family. This sequence in the C-terminal section; belongs to the transferase hexapeptide repeat family. Homotrimer. Requires Mg(2+) as cofactor.

It localises to the cytoplasm. It catalyses the reaction alpha-D-glucosamine 1-phosphate + acetyl-CoA = N-acetyl-alpha-D-glucosamine 1-phosphate + CoA + H(+). The enzyme catalyses N-acetyl-alpha-D-glucosamine 1-phosphate + UTP + H(+) = UDP-N-acetyl-alpha-D-glucosamine + diphosphate. The protein operates within nucleotide-sugar biosynthesis; UDP-N-acetyl-alpha-D-glucosamine biosynthesis; N-acetyl-alpha-D-glucosamine 1-phosphate from alpha-D-glucosamine 6-phosphate (route II): step 2/2. Its pathway is nucleotide-sugar biosynthesis; UDP-N-acetyl-alpha-D-glucosamine biosynthesis; UDP-N-acetyl-alpha-D-glucosamine from N-acetyl-alpha-D-glucosamine 1-phosphate: step 1/1. It functions in the pathway bacterial outer membrane biogenesis; LPS lipid A biosynthesis. Functionally, catalyzes the last two sequential reactions in the de novo biosynthetic pathway for UDP-N-acetylglucosamine (UDP-GlcNAc). The C-terminal domain catalyzes the transfer of acetyl group from acetyl coenzyme A to glucosamine-1-phosphate (GlcN-1-P) to produce N-acetylglucosamine-1-phosphate (GlcNAc-1-P), which is converted into UDP-GlcNAc by the transfer of uridine 5-monophosphate (from uridine 5-triphosphate), a reaction catalyzed by the N-terminal domain. The polypeptide is Bifunctional protein GlmU (Idiomarina loihiensis (strain ATCC BAA-735 / DSM 15497 / L2-TR)).